The sequence spans 434 residues: Serine hydroxymethyltransferase (434 aa).

(6S)-5,6,7,8-tetrahydrofolate is bound by residues leucine 132 and glycine 136–leucine 138. N6-(pyridoxal phosphate)lysine is present on lysine 241.

It belongs to the SHMT family. Homodimer. The cofactor is pyridoxal 5'-phosphate.

Its subcellular location is the cytoplasm. It carries out the reaction (6R)-5,10-methylene-5,6,7,8-tetrahydrofolate + glycine + H2O = (6S)-5,6,7,8-tetrahydrofolate + L-serine. The protein operates within one-carbon metabolism; tetrahydrofolate interconversion. Its pathway is amino-acid biosynthesis; glycine biosynthesis; glycine from L-serine: step 1/1. Its function is as follows. Catalyzes the reversible interconversion of serine and glycine with tetrahydrofolate (THF) serving as the one-carbon carrier. This reaction serves as the major source of one-carbon groups required for the biosynthesis of purines, thymidylate, methionine, and other important biomolecules. Also exhibits THF-independent aldolase activity toward beta-hydroxyamino acids, producing glycine and aldehydes, via a retro-aldol mechanism. In Kineococcus radiotolerans (strain ATCC BAA-149 / DSM 14245 / SRS30216), this protein is Serine hydroxymethyltransferase.